A 380-amino-acid chain; its full sequence is Cytochrome b (380 aa).

4 helical membrane-spanning segments follow: residues 34–54 (FGSL…LLAA), 78–99 (WLIR…YLHI), 114–134 (WNTG…GYVL), and 179–199 (FFTL…IHLT). Positions 84 and 98 each coordinate heme b. Heme b contacts are provided by H183 and H197. H202 contacts a ubiquinone. 4 helical membrane passes run 227-247 (LKDI…ALFS), 289-309 (LGGV…PLLH), 321-341 (FSQL…WVGS), and 348-368 (FIII…ILFP).

It belongs to the cytochrome b family. As to quaternary structure, the cytochrome bc1 complex contains 11 subunits: 3 respiratory subunits (MT-CYB, CYC1 and UQCRFS1), 2 core proteins (UQCRC1 and UQCRC2) and 6 low-molecular weight proteins (UQCRH/QCR6, UQCRB/QCR7, UQCRQ/QCR8, UQCR10/QCR9, UQCR11/QCR10 and a cleavage product of UQCRFS1). This cytochrome bc1 complex then forms a dimer. Heme b serves as cofactor.

It localises to the mitochondrion inner membrane. Component of the ubiquinol-cytochrome c reductase complex (complex III or cytochrome b-c1 complex) that is part of the mitochondrial respiratory chain. The b-c1 complex mediates electron transfer from ubiquinol to cytochrome c. Contributes to the generation of a proton gradient across the mitochondrial membrane that is then used for ATP synthesis. The chain is Cytochrome b (MT-CYB) from Antigone rubicunda (Brolga crane).